Consider the following 259-residue polypeptide: MRDRRGPLGTCLAQVQQAGGGDSDKLSCSLKKRMPEGPWPADAPSWMNKPVVDGNSQSEALSLEMRKDPSGAGLWLHSGGPVLPYVRESVRRNPASAATPSTAVGLFPAPTECFARVSCSGVEALGRRDWLGGGPRATDGHRGQCPKGEPRVSRLPRHQKVPEMGSFQDDPPSAFPKGLGSELEPACLHSILSATLHVYPEVLLSEETKRIFLDRLKPMFSKQTIEFKKMLKSTSDGLQITLGLLALQPFELANTLCHS.

Disordered regions lie at residues 1-44 and 131-154; these read MRDR…ADAP and LGGGPRATDGHRGQCPKGEPRVSR. Basic and acidic residues predominate over residues 138-152; sequence TDGHRGQCPKGEPRV.

As to quaternary structure, interacts with transcriptional activator STAT3; the interaction occurs in both the nucleus and the cytoplasm, is enhanced by IL6 and promotes STAT3 dephosphorylation, leading to negative regulation of STAT3 transcriptional activator activity. Can interact with both unphosphorylated and phosphorylated STAT3 but interacts preferentially with phosphorylated STAT3 in the nucleus. Interacts with protein phosphatase PTPN2/TC45; this promotes interaction of PTPN2 with STAT3, leading to dephosphorylation of STAT3 by PTPN2.

Its subcellular location is the nucleus. The protein resides in the cytoplasm. It localises to the cytoplasmic vesicle. It is found in the secretory vesicle. The protein localises to the acrosome. Its function is as follows. Promotes dephosphorylation of transcriptional activator STAT3 by interacting with both STAT3 and protein phosphatase PTPN2. This promotes interaction of PTPN2 with STAT3 and mediates STAT3 dephosphorylation by PTPN2, leading to negative regulation of STAT3 transcriptional activator activity. May be required for spermiogenesis or sperm function. In Homo sapiens (Human), this protein is Protein FAM220A.